The primary structure comprises 94 residues: Sucrose operon repressor (94 aa).

The region spanning 1-56 (MASLHDVARLAGVSKSTVSRVINDEYGVKEATKQKVRQAVAECGYVPNQVAKDLKE) is the HTH lacI-type domain. The segment at residues 4-23 (LHDVARLAGVSKSTVSRVIN) is a DNA-binding region (H-T-H motif).

Functionally, repressor for the scr operon. Binds D-fructose as an inducer. The protein is Sucrose operon repressor (scrR) of Vibrio alginolyticus.